A 415-amino-acid chain; its full sequence is Mitogen-activated protein kinase MPS1 (415 aa).

The 292-residue stretch at 23 to 314 (YTVTKELGQG…VEQALEHPYL (292 aa)) folds into the Protein kinase domain. Residues 29–37 (LGQGAYGIV) and K52 contribute to the ATP site. The tract at residues 363–394 (GAGGHGAPHAPQVPIPAGAGQGQWKAEDPRPQ) is disordered.

This sequence belongs to the protein kinase superfamily. Ser/Thr protein kinase family. MAP kinase subfamily. Interacts with transcription factor MIG1. Interacts with transcription factor SWI6. Requires Mg(2+) as cofactor.

The catalysed reaction is L-seryl-[protein] + ATP = O-phospho-L-seryl-[protein] + ADP + H(+). It carries out the reaction L-threonyl-[protein] + ATP = O-phospho-L-threonyl-[protein] + ADP + H(+). Its function is as follows. Mitogen-activated protein kinase; part of the MCK1-MKK2-MPS1 MAP kinase (MAPK) signal transduction cascade that is essential for cell wall integrity and plant infection, but not for plant defense responses. Beside its role in pathogenesis, the MPS1 cascade is active in conidiation and cellular stress responses. Targets downstream of the MPS1-MAPK pathway include transcription factors MIG1 and SWI6, as well as GSK1 and MPG1. In Pyricularia oryzae (strain 70-15 / ATCC MYA-4617 / FGSC 8958) (Rice blast fungus), this protein is Mitogen-activated protein kinase MPS1.